A 302-amino-acid polypeptide reads, in one-letter code: Genome polyprotein (302 aa).

Residues 28–46 are compositionally biased toward basic and acidic residues; it reads ENLDTGKDSKKDTSGKGDK. Residues 28–72 form a disordered region; the sequence is ENLDTGKDSKKDTSGKGDKPQNSQTGQGSKEQTKIGTVSKDVNVG. The segment covering 47–63 has biased composition (polar residues); sequence PQNSQTGQGSKEQTKIG.

This sequence belongs to the potyviridae genome polyprotein family. Genome polyprotein of potyviruses undergoes post-translational proteolytic processing by the main proteinase NIa-pro resulting in the production of at least ten individual proteins. The P1 proteinase and the HC-pro cleave only their respective C-termini autocatalytically. 6K1 is essential for proper proteolytic separation of P3 from CI.

The protein localises to the virion. The enzyme catalyses RNA(n) + a ribonucleoside 5'-triphosphate = RNA(n+1) + diphosphate. An RNA-dependent RNA polymerase that plays an essential role in the virus replication. In terms of biological role, involved in aphid transmission, cell-to-cell and systemis movement, encapsidation of the viral RNA and in the regulation of viral RNA amplification. The polypeptide is Genome polyprotein (Watermelon mosaic virus II (isolate Australia)).